An 823-amino-acid chain; its full sequence is Ankyrin repeat domain-containing protein 20A1 (823 aa).

ANK repeat units lie at residues 66–95 (QHRT…QIDV), 99–128 (ENRT…NPNL), 132–161 (YGNT…HIEA), 165–194 (DNNT…SSHA), and 198–227 (LRRS…DVFA). Disordered regions lie at residues 301 to 343 (VPEK…EVED) and 355 to 402 (VQTL…LSEN). Positions 372 to 384 (QERHERSEKKQPQ) are enriched in basic and acidic residues. Coiled-coil stretches lie at residues 431–480 (KKLK…KQLE), 565–724 (EMIT…NNST), and 776–805 (LVLE…EKTE).

The chain is Ankyrin repeat domain-containing protein 20A1 (ANKRD20A1) from Homo sapiens (Human).